Here is a 264-residue protein sequence, read N- to C-terminus: Glutamate racemase (264 aa).

Residues Asp10–Ser11 and Tyr42–Gly43 contribute to the substrate site. Cys73 functions as the Proton donor/acceptor in the catalytic mechanism. Residue Asn74–Thr75 coordinates substrate. Cys181 serves as the catalytic Proton donor/acceptor. Thr182–His183 contacts substrate.

Belongs to the aspartate/glutamate racemases family.

The catalysed reaction is L-glutamate = D-glutamate. It participates in cell wall biogenesis; peptidoglycan biosynthesis. In terms of biological role, provides the (R)-glutamate required for cell wall biosynthesis. In Thermoanaerobacter sp. (strain X514), this protein is Glutamate racemase.